The sequence spans 1216 residues: Coatomer subunit alpha-1 (1216 aa).

WD repeat units follow at residues 7-48 (TKSN…DRFD), 49-88 (EHEGPVRGVHFHNSQPLFVSGGDDYKIKVWNYKNHRCLFT), 91-132 (GHLD…SVLT), 133-172 (GHNHYVMCASFHPKEDLVVSASLDQTVRVWDIGALRKKTV), 202-241 (GHDRGVNWAAFHPTLPLIVSGADDRQVKLWRMNETKAWEV), 246-285 (GHMNNVSSVMFHAKQDIIVSNSEDKSIRVWDATKRTGLQT), 288-326 (REHDRFWILAVHPEMNLLAAGHDSGMIVFKLERERPAFA), and 363-404 (SLNQ…VGRS).

As to quaternary structure, oligomeric complex that consists of at least the alpha, beta, beta', gamma, delta, epsilon and zeta subunits.

It localises to the cytoplasm. Its subcellular location is the golgi apparatus membrane. It is found in the cytoplasmic vesicle. The protein localises to the COPI-coated vesicle membrane. In terms of biological role, the coatomer is a cytosolic protein complex that binds to dilysine motifs and reversibly associates with Golgi non-clathrin-coated vesicles, which further mediate biosynthetic protein transport from the ER, via the Golgi up to the trans Golgi network. Coatomer complex is required for budding from Golgi membranes, and is essential for the retrograde Golgi-to-ER transport of dilysine-tagged proteins. The chain is Coatomer subunit alpha-1 from Arabidopsis thaliana (Mouse-ear cress).